The sequence spans 341 residues: Eukaryotic translation initiation factor 3 subunit I (341 aa).

WD repeat units follow at residues 8-47 (GHER…RLGT), 56-95 (GHNG…CLYT), 151-190 (LSGS…EVQA), 194-233 (EHSA…VMKV), 235-274 (TTET…GKFE), and 291-331 (GHFG…RSRP).

The protein belongs to the eIF-3 subunit I family. As to quaternary structure, component of the eukaryotic translation initiation factor 3 (eIF-3) complex.

Its subcellular location is the cytoplasm. Its function is as follows. Component of the eukaryotic translation initiation factor 3 (eIF-3) complex, which is involved in protein synthesis of a specialized repertoire of mRNAs and, together with other initiation factors, stimulates binding of mRNA and methionyl-tRNAi to the 40S ribosome. The eIF-3 complex specifically targets and initiates translation of a subset of mRNAs involved in cell proliferation. In Cryptococcus neoformans var. neoformans serotype D (strain B-3501A) (Filobasidiella neoformans), this protein is Eukaryotic translation initiation factor 3 subunit I.